We begin with the raw amino-acid sequence, 407 residues long: Sensor histidine kinase YdfH (407 aa).

Residues 1–25 (MLIRNPFKDKYYSHDRRALNMLALR) lie on the Cytoplasmic side of the membrane. The next 2 membrane-spanning stretches (helical) occupy residues 26–46 (VPGLAFILMIYIASIVLQFVS) and 47–67 (GGWSILLLYAFTILIAIFALL). Topologically, residues 68 to 78 (HWHSYRWVKKR) are cytoplasmic. The next 2 helical transmembrane spans lie at 79-99 (VILYFAVQGLITFALANLMTG) and 100-120 (FFILVIIGLYAFLIGQIIGMA). The Cytoplasmic portion of the chain corresponds to 121–125 (DRRRT). The chain crosses the membrane as a helical span at residues 126–146 (FLILYLLLLLVINSAYHLHKG). The Extracellular segment spans residues 147–150 (EVLH). Residues 151 to 171 (FIVIAAPIMIVIITYAATFFA) form a helical membrane-spanning segment. Over 172-407 (QVDEKIKAQL…VPIQGEMQDE (236 aa)) the chain is Cytoplasmic. One can recognise a Histidine kinase domain in the interval 201 to 402 (ERQRMARDLH…QIEITVPIQG (202 aa)). Phosphohistidine; by autocatalysis is present on His210.

It localises to the cell membrane. The catalysed reaction is ATP + protein L-histidine = ADP + protein N-phospho-L-histidine.. Its function is as follows. Member of the two-component regulatory system YdfH/YdfI. May activate YdfI by phosphorylation. The sequence is that of Sensor histidine kinase YdfH (ydfH) from Bacillus subtilis (strain 168).